Consider the following 351-residue polypeptide: GTPase Obg (351 aa).

Residues 1–159 (MKFLDQCKIY…RWVWLRLKLI (159 aa)) form the Obg domain. Residues 160-327 (ADAGLVGLPN…MLFELLRHIR (168 aa)) enclose the OBG-type G domain. GTP-binding positions include 166–173 (GLPNAGKS), 191–195 (FTTLT), 212–215 (DIPG), 279–282 (NKID), and 308–310 (SGA). Residues Ser173 and Thr193 each coordinate Mg(2+).

The protein belongs to the TRAFAC class OBG-HflX-like GTPase superfamily. OBG GTPase family. In terms of assembly, monomer. Requires Mg(2+) as cofactor.

It is found in the cytoplasm. In terms of biological role, an essential GTPase which binds GTP, GDP and possibly (p)ppGpp with moderate affinity, with high nucleotide exchange rates and a fairly low GTP hydrolysis rate. Plays a role in control of the cell cycle, stress response, ribosome biogenesis and in those bacteria that undergo differentiation, in morphogenesis control. This Rhodospirillum centenum (strain ATCC 51521 / SW) protein is GTPase Obg.